Consider the following 161-residue polypeptide: MSSSGAPSRKTLSKIATNRLQKELVEWQMNPPTGFKHKVTDNLQRWIIEVIGAPGTLYANDTYQLQVDFPEHYPMESPQVIFLHPAPLHPHIYSNGHICLDILYDSWSPAMTVSSICISILSMLSSSTEKQRPTDNDRYVKNCKNGRSPKETRWWFHDDKV.

The region spanning 15-161 is the UBC core domain; the sequence is IATNRLQKEL…TRWWFHDDKV (147 aa). The Glycyl thioester intermediate role is filled by Cys-99.

This sequence belongs to the ubiquitin-conjugating enzyme family.

It carries out the reaction S-ubiquitinyl-[E1 ubiquitin-activating enzyme]-L-cysteine + [E2 ubiquitin-conjugating enzyme]-L-cysteine = [E1 ubiquitin-activating enzyme]-L-cysteine + S-ubiquitinyl-[E2 ubiquitin-conjugating enzyme]-L-cysteine.. The protein operates within protein modification; protein ubiquitination. In terms of biological role, accepts the ubiquitin from the E1 complex and catalyzes its covalent attachment to other proteins. The polypeptide is Probable ubiquitin-conjugating enzyme E2 16 (UBC16) (Arabidopsis thaliana (Mouse-ear cress)).